A 182-amino-acid polypeptide reads, in one-letter code: ATP-dependent protease subunit HslV (182 aa).

Thr-12 is a catalytic residue. Ala-167, Cys-170, and Thr-173 together coordinate Na(+).

It belongs to the peptidase T1B family. HslV subfamily. A double ring-shaped homohexamer of HslV is capped on each side by a ring-shaped HslU homohexamer. The assembly of the HslU/HslV complex is dependent on binding of ATP.

It localises to the cytoplasm. It catalyses the reaction ATP-dependent cleavage of peptide bonds with broad specificity.. With respect to regulation, allosterically activated by HslU binding. Protease subunit of a proteasome-like degradation complex believed to be a general protein degrading machinery. The chain is ATP-dependent protease subunit HslV from Chlorobium phaeobacteroides (strain DSM 266 / SMG 266 / 2430).